The chain runs to 91 residues: Putative membrane protein insertion efficiency factor (91 aa).

This sequence belongs to the UPF0161 family.

Its subcellular location is the cell inner membrane. Could be involved in insertion of integral membrane proteins into the membrane. This is Putative membrane protein insertion efficiency factor from Saccharophagus degradans (strain 2-40 / ATCC 43961 / DSM 17024).